Consider the following 815-residue polypeptide: Neuronal PAS domain-containing protein 2 (815 aa).

The segment covering 1 to 10 (MDEDEKDRAK) has biased composition (basic and acidic residues). The disordered stretch occupies residues 1 to 21 (MDEDEKDRAKRASRNKSEKKR). The segment at 1-61 (MDEDEKDRAK…VIGFLQKHNE (61 aa)) is sufficient for heterodimer formation with BMAL1, E-box binding and for the effect of NADPH. Residues 9–59 (AKRASRNKSEKKRRDQFNVLIKELSSMLPGNTRKMDKTTVLEKVIGFLQKH) form the bHLH domain. The region spanning 82-152 (NEEFTQLMLE…KMLSSCMLMT (71 aa)) is the PAS 1 domain. Residues H119 and H171 each coordinate heme b. One can recognise a PAS 2 domain in the interval 237–307 (FLKEMCIVEE…RCHEHLMQFG (71 aa)). Positions 311 to 354 (SCCYRFLTKGQQWIWLQTHYYITYHQWNSKPEFIVCTHMVVSYA) constitute a PAC domain. Low complexity predominate over residues 405-420 (RTPSVSSRSSPKSSHT). Disordered regions lie at residues 405–467 (RTPS…SLPS), 584–656 (PGQI…AAGC), and 728–815 (FATT…QPLR). Composition is skewed to polar residues over residues 425–462 (PASTPTKLTAEASTPLQRTSSTQQDLSAHRLSQPTALQ), 588–608 (ASPQTPSQQVLREASVISSQG), and 616–630 (ELTTGSSRPTRSTAT). Low complexity-rich tracts occupy residues 633–655 (GPSTSLSRRGPGPSSGPGASAAG) and 732–752 (PPSQSSSLPPMQLQHQQHQQQ). Over residues 753-786 (RYLQVQTPSSLHNEQTDSLLLSSYSPQQGNMGYH) the composition is skewed to polar residues. Residues 787-815 (QTQQQQQQQQLPRRSNSLSESSNLPQPLR) show a composition bias toward low complexity.

Component of the circadian clock oscillator which includes the CRY proteins, CLOCK or NPAS2, BMAL1 or BMAL2, CSNK1D and/or CSNK1E, TIMELESS and the PER proteins. Efficient DNA binding requires dimerization with another bHLH protein. Forms a heterodimer with BMAL1 and this heterodimerization is required for E-box-dependent transactivation. Heme is required as a cofactor. In terms of tissue distribution, expressed in the retinal photoreceptor cells (at protein level). Expressed in the pineal gland and retina.

The protein resides in the nucleus. With respect to regulation, carbon monoxide (CO) and the redox state of the cell can modulate the transcriptional activity of the NPAS2-BMAL1 heterodimer. NADH and NADPH enhance the DNA-binding activity of the heterodimer whereas CO binds the heme group in NPAS2 and inhibits the DNA-binding activity of the heterodimer. Its function is as follows. Transcriptional activator which forms a core component of the circadian clock. The circadian clock, an internal time-keeping system, regulates various physiological processes through the generation of approximately 24 hour circadian rhythms in gene expression, which are translated into rhythms in metabolism and behavior. It is derived from the Latin roots 'circa' (about) and 'diem' (day) and acts as an important regulator of a wide array of physiological functions including metabolism, sleep, body temperature, blood pressure, endocrine, immune, cardiovascular, and renal function. Consists of two major components: the central clock, residing in the suprachiasmatic nucleus (SCN) of the brain, and the peripheral clocks that are present in nearly every tissue and organ system. Both the central and peripheral clocks can be reset by environmental cues, also known as Zeitgebers (German for 'timegivers'). The predominant Zeitgeber for the central clock is light, which is sensed by retina and signals directly to the SCN. The central clock entrains the peripheral clocks through neuronal and hormonal signals, body temperature and feeding-related cues, aligning all clocks with the external light/dark cycle. Circadian rhythms allow an organism to achieve temporal homeostasis with its environment at the molecular level by regulating gene expression to create a peak of protein expression once every 24 hours to control when a particular physiological process is most active with respect to the solar day. Transcription and translation of core clock components (CLOCK, NPAS2, BMAL1, BMAL2, PER1, PER2, PER3, CRY1 and CRY2) plays a critical role in rhythm generation, whereas delays imposed by post-translational modifications (PTMs) are important for determining the period (tau) of the rhythms (tau refers to the period of a rhythm and is the length, in time, of one complete cycle). A diurnal rhythm is synchronized with the day/night cycle, while the ultradian and infradian rhythms have a period shorter and longer than 24 hours, respectively. Disruptions in the circadian rhythms contribute to the pathology of cardiovascular diseases, cancer, metabolic syndromes and aging. A transcription/translation feedback loop (TTFL) forms the core of the molecular circadian clock mechanism. Transcription factors, CLOCK or NPAS2 and BMAL1 or BMAL2, form the positive limb of the feedback loop, act in the form of a heterodimer and activate the transcription of core clock genes and clock-controlled genes (involved in key metabolic processes), harboring E-box elements (5'-CACGTG-3') within their promoters. The core clock genes: PER1/2/3 and CRY1/2 which are transcriptional repressors form the negative limb of the feedback loop and interact with the CLOCK|NPAS2-BMAL1|BMAL2 heterodimer inhibiting its activity and thereby negatively regulating their own expression. This heterodimer also activates nuclear receptors NR1D1/2 and RORA/B/G, which form a second feedback loop and which activate and repress BMAL1 transcription, respectively. NPAS2 positively regulates the circadian expression of AANAT in the retinal photoreceptor cells. This is Neuronal PAS domain-containing protein 2 (NPAS2) from Gallus gallus (Chicken).